A 366-amino-acid chain; its full sequence is Ribosomal RNA large subunit methyltransferase M (366 aa).

S-adenosyl-L-methionine is bound by residues Ser188, 221 to 224 (CPGG), Asp240, Asp260, and Asp277. Residue Lys306 is the Proton acceptor of the active site.

The protein belongs to the class I-like SAM-binding methyltransferase superfamily. RNA methyltransferase RlmE family. RlmM subfamily. In terms of assembly, monomer.

The protein resides in the cytoplasm. The enzyme catalyses cytidine(2498) in 23S rRNA + S-adenosyl-L-methionine = 2'-O-methylcytidine(2498) in 23S rRNA + S-adenosyl-L-homocysteine + H(+). In terms of biological role, catalyzes the 2'-O-methylation at nucleotide C2498 in 23S rRNA. In Escherichia coli O45:K1 (strain S88 / ExPEC), this protein is Ribosomal RNA large subunit methyltransferase M.